The chain runs to 315 residues: WD repeat domain-containing protein 83 (315 aa).

7 WD repeats span residues 23–62 (CSQG…LLRT), 65–104 (GHGY…VVRK), 107–146 (GHAG…PEPV), 151–188 (EARD…VSSD), 190–228 (VGSP…LLGE), 231–272 (GHKN…LALA), and 275–313 (VGSN…AEGG).

It belongs to the WD repeat MORG1 family. Interacts with EGLN3/PHD3. Interacts with ERK signaling proteins MAP2K1/MEK1, MAP2K2/MEK2, LAMTOR3, ARAF/Raf-1, MAPK1/ERK2 and MAPK3/ERK1. Identified in the spliceosome C complex. Interacts with PARD6B and CRB3. Interacts strongly with GTP-bound RRAGA but not with inactive GDP-bound. Interacts with p62/SQSTM1. Ubiquitous.

The protein resides in the cytoplasm. It localises to the lysosome. Its subcellular location is the nucleus. In terms of biological role, molecular scaffold protein for various multimeric protein complexes. Acts as a module in the assembly of a multicomponent scaffold for the ERK pathway, linking ERK responses to specific agonists. At low concentrations it enhances ERK activation, whereas high concentrations lead to the inhibition of ERK activation. Also involved in response to hypoxia by acting as a negative regulator of HIF1A/HIF-1-alpha via its interaction with EGLN3/PHD3. May promote degradation of HIF1A. May act by recruiting signaling complexes to a specific upstream activator. May also be involved in pre-mRNA splicing. Participates in tight junction development by regulating apico-basal polarity, a key step in tissue development and organization. Mechanistically, regulates the translocation of PAR6-aPKC from the cytoplasm to the apical surface by acting as an adapter between PARD6B AND CRB3. Also acts as a negative regulator of mTORC1 under nutrient-rich conditions by binding to the active Rag GTPases to inhibit mTORC1 localization to the lysosome and phosphorylation of downstream targets. This facilitates constitutive basal autophagy during nutrient availability. This chain is WD repeat domain-containing protein 83 (Wdr83), found in Mus musculus (Mouse).